The sequence spans 445 residues: Phosphoglucosamine mutase (445 aa).

S102 serves as the catalytic Phosphoserine intermediate. Residues S102, D241, D243, and D245 each coordinate Mg(2+). S102 bears the Phosphoserine mark.

It belongs to the phosphohexose mutase family. Requires Mg(2+) as cofactor. Activated by phosphorylation.

The catalysed reaction is alpha-D-glucosamine 1-phosphate = D-glucosamine 6-phosphate. In terms of biological role, catalyzes the conversion of glucosamine-6-phosphate to glucosamine-1-phosphate. The sequence is that of Phosphoglucosamine mutase from Rhodococcus erythropolis (strain PR4 / NBRC 100887).